Consider the following 290-residue polypeptide: Porphobilinogen deaminase (290 aa).

Cysteine 237 bears the S-(dipyrrolylmethanemethyl)cysteine mark.

It belongs to the HMBS family. Monomer. Dipyrromethane serves as cofactor.

It carries out the reaction 4 porphobilinogen + H2O = hydroxymethylbilane + 4 NH4(+). It functions in the pathway porphyrin-containing compound metabolism; protoporphyrin-IX biosynthesis; coproporphyrinogen-III from 5-aminolevulinate: step 2/4. Tetrapolymerization of the monopyrrole PBG into the hydroxymethylbilane pre-uroporphyrinogen in several discrete steps. This is Porphobilinogen deaminase from Clostridium botulinum (strain Loch Maree / Type A3).